Consider the following 360-residue polypeptide: Lipid-A-disaccharide synthase (360 aa).

It belongs to the LpxB family.

The catalysed reaction is a lipid X + a UDP-2-N,3-O-bis[(3R)-3-hydroxyacyl]-alpha-D-glucosamine = a lipid A disaccharide + UDP + H(+). The protein operates within bacterial outer membrane biogenesis; LPS lipid A biosynthesis. Its function is as follows. Condensation of UDP-2,3-diacylglucosamine and 2,3-diacylglucosamine-1-phosphate to form lipid A disaccharide, a precursor of lipid A, a phosphorylated glycolipid that anchors the lipopolysaccharide to the outer membrane of the cell. This Helicobacter acinonychis (strain Sheeba) protein is Lipid-A-disaccharide synthase.